Consider the following 173-residue polypeptide: 5-hydroxymethyl-dUMP N-hydrolase (173 aa).

The residue at position 2 (A2) is an N-acetylalanine. G16 lines the 5-hydroxymethyl-dUMP pocket. Phosphoserine is present on S17. Positions 18, 19, 20, 87, 89, and 93 each coordinate 5-hydroxymethyl-dUMP. A Phosphoserine modification is found at S87. 4 positions are modified to phosphoserine: S112, S117, S127, and S158. S117 lines the 5-hydroxymethyl-dUMP pocket.

The protein belongs to the 2'-deoxynucleoside 5'-phosphate N-hydrolase 1 family. In terms of assembly, monomer and homodimer.

Its subcellular location is the cytoplasm. The protein resides in the nucleus. The catalysed reaction is 5-hydroxymethyl-dUMP + H2O = 5-hydroxymethyluracil + 2-deoxy-D-ribose 5-phosphate. Functionally, part of a nucleotide salvage pathway that eliminates epigenetically modified 5-hydroxymethyl-dCMP (hmdCMP) in a two-step process entailing deamination to cytotoxic 5-hydroxymethyl-dUMP (hmdUMP), followed by its hydrolysis into 5-hydroxymethyluracil (hmU) and 2-deoxy-D-ribose 5-phosphate (deoxyribosephosphate). Catalyzes the second step in that pathway, the hydrolysis of the N-glycosidic bond in hmdUMP, degrading this cytotoxic nucleotide to avoid its genomic integration. The sequence is that of 5-hydroxymethyl-dUMP N-hydrolase from Mus musculus (Mouse).